Consider the following 55-residue polypeptide: MPQLNPNPWFYIMLMSWLTFSLIIQPELLSFTLTNPLSNKTSTTTRSSPWTWPWT.

Residues 7-29 form a helical membrane-spanning segment; it reads NPWFYIMLMSWLTFSLIIQPELL.

It belongs to the ATPase protein 8 family. In terms of assembly, component of the ATP synthase complex composed at least of ATP5F1A/subunit alpha, ATP5F1B/subunit beta, ATP5MC1/subunit c (homooctomer), MT-ATP6/subunit a, MT-ATP8/subunit 8, ATP5ME/subunit e, ATP5MF/subunit f, ATP5MG/subunit g, ATP5MK/subunit k, ATP5MJ/subunit j, ATP5F1C/subunit gamma, ATP5F1D/subunit delta, ATP5F1E/subunit epsilon, ATP5PF/subunit F6, ATP5PB/subunit b, ATP5PD/subunit d, ATP5PO/subunit OSCP. ATP synthase complex consists of a soluble F(1) head domain (subunits alpha(3) and beta(3)) - the catalytic core - and a membrane F(0) domain - the membrane proton channel (subunits c, a, 8, e, f, g, k and j). These two domains are linked by a central stalk (subunits gamma, delta, and epsilon) rotating inside the F1 region and a stationary peripheral stalk (subunits F6, b, d, and OSCP).

It is found in the mitochondrion membrane. Functionally, subunit 8, of the mitochondrial membrane ATP synthase complex (F(1)F(0) ATP synthase or Complex V) that produces ATP from ADP in the presence of a proton gradient across the membrane which is generated by electron transport complexes of the respiratory chain. ATP synthase complex consist of a soluble F(1) head domain - the catalytic core - and a membrane F(1) domain - the membrane proton channel. These two domains are linked by a central stalk rotating inside the F(1) region and a stationary peripheral stalk. During catalysis, ATP synthesis in the catalytic domain of F(1) is coupled via a rotary mechanism of the central stalk subunits to proton translocation. In vivo, can only synthesize ATP although its ATP hydrolase activity can be activated artificially in vitro. Part of the complex F(0) domain. The chain is ATP synthase F(0) complex subunit 8 from Musophaga violacea (Violet turaco).